The chain runs to 430 residues: Trigger factor (430 aa).

In terms of domain architecture, PPIase FKBP-type spans 163 to 248; it reads GDVVDVDYKG…LNSIKTSILP (86 aa).

This sequence belongs to the FKBP-type PPIase family. Tig subfamily.

It localises to the cytoplasm. It catalyses the reaction [protein]-peptidylproline (omega=180) = [protein]-peptidylproline (omega=0). In terms of biological role, involved in protein export. Acts as a chaperone by maintaining the newly synthesized protein in an open conformation. Functions as a peptidyl-prolyl cis-trans isomerase. In Lawsonia intracellularis (strain PHE/MN1-00), this protein is Trigger factor.